The sequence spans 391 residues: 23S rRNA (uracil(747)-C(5))-methyltransferase RlmC (391 aa).

Residues C5, C13, C16, and C95 each coordinate [4Fe-4S] cluster. The S-adenosyl-L-methionine site is built by Q220, F249, E276, and N322. The active-site Nucleophile is the C349.

This sequence belongs to the class I-like SAM-binding methyltransferase superfamily. RNA M5U methyltransferase family. RlmC subfamily.

It carries out the reaction uridine(747) in 23S rRNA + S-adenosyl-L-methionine = 5-methyluridine(747) in 23S rRNA + S-adenosyl-L-homocysteine + H(+). In terms of biological role, catalyzes the formation of 5-methyl-uridine at position 747 (m5U747) in 23S rRNA. The sequence is that of 23S rRNA (uracil(747)-C(5))-methyltransferase RlmC from Actinobacillus pleuropneumoniae serotype 3 (strain JL03).